The sequence spans 230 residues: C-methyltransferase CouO (230 aa).

Belongs to the methyltransferase superfamily.

It participates in antibiotic biosynthesis. Functionally, mediates C-methylation at the 8-position of the aminocoumarin moieties in coumermycin A1 in the biosynthetic pathway of coumermycin antibiotic. Active on both mono- and bis-amides for mono- and di-C-methylation adjacent to the phenolic hydroxyl before it is glycosylated by CouM. The polypeptide is C-methyltransferase CouO (couO) (Streptomyces rishiriensis).